We begin with the raw amino-acid sequence, 122 residues long: Small ribosomal subunit protein bS6 (122 aa).

The protein belongs to the bacterial ribosomal protein bS6 family.

In terms of biological role, binds together with bS18 to 16S ribosomal RNA. This chain is Small ribosomal subunit protein bS6, found in Neisseria meningitidis serogroup C (strain 053442).